The primary structure comprises 123 residues: Ribonuclease P protein component 1 (123 aa).

Positions 73–93 (PDNGVGTAFKPAGGETRQTTG) are disordered.

It belongs to the eukaryotic/archaeal RNase P protein component 1 family. As to quaternary structure, consists of a catalytic RNA component and at least 4-5 protein subunits.

Its subcellular location is the cytoplasm. It carries out the reaction Endonucleolytic cleavage of RNA, removing 5'-extranucleotides from tRNA precursor.. Part of ribonuclease P, a protein complex that generates mature tRNA molecules by cleaving their 5'-ends. This chain is Ribonuclease P protein component 1, found in Halobacterium salinarum (strain ATCC 29341 / DSM 671 / R1).